A 204-amino-acid chain; its full sequence is LexA repressor (204 aa).

Residues 27 to 47 (VREIGEAVGLASSSTVHGHLA) constitute a DNA-binding region (H-T-H motif). Active-site for autocatalytic cleavage activity residues include S126 and K164.

The protein belongs to the peptidase S24 family. In terms of assembly, homodimer.

It catalyses the reaction Hydrolysis of Ala-|-Gly bond in repressor LexA.. Represses a number of genes involved in the response to DNA damage (SOS response), including recA and lexA. In the presence of single-stranded DNA, RecA interacts with LexA causing an autocatalytic cleavage which disrupts the DNA-binding part of LexA, leading to derepression of the SOS regulon and eventually DNA repair. This Listeria innocua serovar 6a (strain ATCC BAA-680 / CLIP 11262) protein is LexA repressor.